The chain runs to 392 residues: Neutrophil cytosol factor 1 (392 aa).

The PX domain maps to 4–125 (HFIRHIALLG…NFFKVRPDDL (122 aa)). 2 consecutive SH3 domains span residues 156 to 215 (IILQ…PLDS) and 226 to 285 (YAGE…KAGQ). Residues 290-392 (AKSQIKSRGA…STKRKLASAV (103 aa)) are disordered. A phosphoserine mark is found at Ser304 and Ser305. Basic residues predominate over residues 310–319 (HSIHQRSRKR). Ser321, Ser329, and Ser348 each carry phosphoserine. Basic and acidic residues predominate over residues 376 to 385 (ILHRCSESTK).

In terms of assembly, component of the phagocyte NADPH oxidase complex composed of an obligatory core heterodimer formed by the membrane proteins CYBA and CYBB and the cytosolic regulatory subunits NCF1/p47-phox, NCF2/p67-phox, NCF4/p40-phox and the small GTPase RAC1 or RAC2. Part of a cytosolic complex composed at least by NCF1, NCF2 and NCF4. Interacts (via C-terminus) with NCF2 (via the C-terminal SH3 domain). Interacts with NCF4. Interacts with CYBB. Interacts (via the second SH3 domain) with CYBA; interaction is phosphorylation-dependent. Interacts with NOXA1. Interacts with ADAM15. Interacts with TRAF4. Interacts with FASLG. Interacts with PARK7 (via C-terminus); the interaction is enhanced by LPS and modulates NCF1 phosphorylation and membrane translocation. Phosphorylated by PRKCD; phosphorylation induces activation of NCF1, leading to assembly and activation of the NADPH oxidase complex.

The protein resides in the cytoplasm. It localises to the cytosol. It is found in the membrane. Functionally, subunit of the phagocyte NADPH oxidase complex that mediates the transfer of electrons from cytosolic NADPH to O2 to produce the superoxide anion (O2(-)). In the activated complex, electrons are first transferred from NADPH to flavin adenine dinucleotide (FAD) and subsequently transferred via two heme molecules to molecular oxygen, producing superoxide through an outer-sphere reaction. Activation of the NADPH oxidase complex is initiated by the assembly of cytosolic subunits of the NADPH oxidase complex with the core NADPH oxidase complex to form a complex at the plasma membrane or phagosomal membrane. This activation process is initiated by phosphorylation dependent binding of the cytosolic NCF1/p47-phox subunit to the C-terminus of CYBA/p22-phox. This chain is Neutrophil cytosol factor 1, found in Bos taurus (Bovine).